Consider the following 187-residue polypeptide: 2-oxoglutarate synthase subunit KorC (187 aa).

Heterotetramer of the KorA, KorB, KorC and KorD subunits.

The enzyme catalyses 2 oxidized [2Fe-2S]-[ferredoxin] + 2-oxoglutarate + CoA = succinyl-CoA + 2 reduced [2Fe-2S]-[ferredoxin] + CO2 + H(+). The sequence is that of 2-oxoglutarate synthase subunit KorC (korC) from Methanocaldococcus jannaschii (strain ATCC 43067 / DSM 2661 / JAL-1 / JCM 10045 / NBRC 100440) (Methanococcus jannaschii).